Consider the following 379-residue polypeptide: UDP-N-acetylglucosamine--N-acetylmuramyl-(pentapeptide) pyrophosphoryl-undecaprenol N-acetylglucosamine transferase (379 aa).

UDP-N-acetyl-alpha-D-glucosamine contacts are provided by residues 10-12 (TGG), Asn124, and Arg165. Positions 174 to 195 (TRDQGPGIRDQEKHMTDSTGPA) are disordered. UDP-N-acetyl-alpha-D-glucosamine-binding residues include Ser211, Ile266, and Gln311.

It belongs to the glycosyltransferase 28 family. MurG subfamily.

The protein localises to the cell inner membrane. It carries out the reaction di-trans,octa-cis-undecaprenyl diphospho-N-acetyl-alpha-D-muramoyl-L-alanyl-D-glutamyl-meso-2,6-diaminopimeloyl-D-alanyl-D-alanine + UDP-N-acetyl-alpha-D-glucosamine = di-trans,octa-cis-undecaprenyl diphospho-[N-acetyl-alpha-D-glucosaminyl-(1-&gt;4)]-N-acetyl-alpha-D-muramoyl-L-alanyl-D-glutamyl-meso-2,6-diaminopimeloyl-D-alanyl-D-alanine + UDP + H(+). The protein operates within cell wall biogenesis; peptidoglycan biosynthesis. In terms of biological role, cell wall formation. Catalyzes the transfer of a GlcNAc subunit on undecaprenyl-pyrophosphoryl-MurNAc-pentapeptide (lipid intermediate I) to form undecaprenyl-pyrophosphoryl-MurNAc-(pentapeptide)GlcNAc (lipid intermediate II). This is UDP-N-acetylglucosamine--N-acetylmuramyl-(pentapeptide) pyrophosphoryl-undecaprenol N-acetylglucosamine transferase from Pelobacter propionicus (strain DSM 2379 / NBRC 103807 / OttBd1).